A 255-amino-acid polypeptide reads, in one-letter code: Hydroxyacylglutathione hydrolase (255 aa).

Zn(2+)-binding residues include His-53, His-55, Asp-57, His-58, His-110, Asp-127, and His-165.

This sequence belongs to the metallo-beta-lactamase superfamily. Glyoxalase II family. Monomer. It depends on Zn(2+) as a cofactor.

It catalyses the reaction an S-(2-hydroxyacyl)glutathione + H2O = a 2-hydroxy carboxylate + glutathione + H(+). Its pathway is secondary metabolite metabolism; methylglyoxal degradation; (R)-lactate from methylglyoxal: step 2/2. In terms of biological role, thiolesterase that catalyzes the hydrolysis of S-D-lactoyl-glutathione to form glutathione and D-lactic acid. The sequence is that of Hydroxyacylglutathione hydrolase from Xanthomonas euvesicatoria pv. vesicatoria (strain 85-10) (Xanthomonas campestris pv. vesicatoria).